Here is a 401-residue protein sequence, read N- to C-terminus: Patatin-like protein 4 (401 aa).

A PNPLA domain is found at 17-218 (LSLDGGGVRG…TANDPTLVGM (202 aa)). A GXGXXG motif is present at residues 21–26 (GGGVRG). Residues 60–64 (GTSTG) carry the GXSXG motif. Serine 62 (nucleophile) is an active-site residue. Residue aspartate 205 is the Proton acceptor of the active site. The DGA/G motif lies at 205 to 207 (DGG).

The protein belongs to the patatin family.

Its function is as follows. Possesses non-specific lipolytic acyl hydrolase (LAH) activity. Hydrolyzes phospholipids as well as galactolipids. May play a role in disease resistance. The chain is Patatin-like protein 4 (PLP4) from Arabidopsis thaliana (Mouse-ear cress).